Here is a 356-residue protein sequence, read N- to C-terminus: Transcription factor ATOH1 (356 aa).

Residues 1 to 21 (MSRLLHAEEWAEVKELGDHHR) are compositionally biased toward basic and acidic residues. 2 disordered regions span residues 1–56 (MSRL…PELS) and 92–125 (SEAA…GPVK). The segment covering 26–40 (HHLPQPPPPPPPQPP) has biased composition (pro residues). The span at 96 to 109 (APRDEVDGRGELVR) shows a compositional bias: basic and acidic residues. The segment covering 110–124 (RSSGGASSSKSPGPV) has biased composition (low complexity). The bHLH domain occupies 161-213 (QRRLAANARERRRMHGLNHAFDQLRNVIPSFNNDKKLSKYETLQMAQIYINAL). Disordered regions lie at residues 218-279 (QTPS…TRFS) and 314-356 (SPSL…DEAS). Residues 252–266 (NATAAGAQQASGGSQ) show a composition bias toward low complexity. A compositionally biased stretch (basic and acidic residues) spans 337–356 (HRSDGEFSPHSHYSDSDEAS).

As to quaternary structure, efficient DNA binding requires dimerization with another bHLH protein.

The protein resides in the nucleus. Its function is as follows. Transcriptional regulator. Activates E box-dependent transcription in collaboration with TCF3/E47, but the activity is completely antagonized by the negative regulator of neurogenesis HES1. Plays a role in the differentiation of subsets of neural cells by activating E box-dependent transcription. This Pan troglodytes (Chimpanzee) protein is Transcription factor ATOH1.